The sequence spans 283 residues: Para-Rep C7 (283 aa).

Residues S3–W96 enclose the CRESS-DNA virus Rep endonuclease domain. The RCR-1 motif lies at C10–L13. 2 residues coordinate a divalent metal cation: E36 and H42. The RCR-2 signature appears at H42–Q44. Residues K51–K71 carry the Nuclear localization signal motif. The For DNA cleavage activity role is filled by Y79. An RCR-3 motif is present at residues Y79 to K82. E84 lines the a divalent metal cation pocket. The Nuclear localization signal motif lies at W96–H102. G178–S180 is a binding site for ATP.

The protein belongs to the nanoviridea/circoviridae replication-associated protein family. In terms of assembly, homooligomer (Potential). Rep binds to repeated DNA motifs (iterons). It depends on Mg(2+) as a cofactor. Requires Mn(2+) as cofactor.

Its subcellular location is the host nucleus. It catalyses the reaction ATP + H2O = ADP + phosphate + H(+). Its function is as follows. Initiates and terminates the replication only of its own subviral DNA molecule. The closed circular ssDNA genome is first converted to a superhelical dsDNA. Rep binds a specific hairpin at the genome origin of replication. Introduces an endonucleolytic nick within the intergenic region of the genome, thereby initiating the rolling circle replication (RCR). Following cleavage, binds covalently to the 5'-phosphate of DNA as a tyrosyl ester. The cleavage gives rise to a free 3'-OH that serves as a primer for the cellular DNA polymerase. The polymerase synthesizes the (+) strand DNA by rolling circle mechanism. After one round of replication, a Rep-catalyzed nucleotidyl transfer reaction releases a circular single-stranded virus genome, thereby terminating the replication. Displays origin-specific DNA cleavage, nucleotidyl transferase, ATPase and helicase activities. The sequence is that of Para-Rep C7 (C7) from Faba bean necrotic yellows C7 alphasatellite (FBNYC7A).